Reading from the N-terminus, the 78-residue chain is Large ribosomal subunit protein bL28 (78 aa).

The protein belongs to the bacterial ribosomal protein bL28 family.

In Synechococcus sp. (strain JA-2-3B'a(2-13)) (Cyanobacteria bacterium Yellowstone B-Prime), this protein is Large ribosomal subunit protein bL28.